The primary structure comprises 285 residues: Probable endonuclease 4 (285 aa).

Zn(2+)-binding residues include His69, His109, Glu145, Asp179, His182, His216, Asp229, His231, and Glu261.

The protein belongs to the AP endonuclease 2 family. The cofactor is Zn(2+).

The enzyme catalyses Endonucleolytic cleavage to 5'-phosphooligonucleotide end-products.. Its function is as follows. Endonuclease IV plays a role in DNA repair. It cleaves phosphodiester bonds at apurinic or apyrimidinic (AP) sites, generating a 3'-hydroxyl group and a 5'-terminal sugar phosphate. The sequence is that of Probable endonuclease 4 from Salmonella dublin (strain CT_02021853).